Consider the following 148-residue polypeptide: Gametocyte-specific factor 1-like (148 aa).

CHHC U11-48K-type zinc fingers lie at residues 6 to 33 and 40 to 67; these read FEIC…RRKN and MATC…VNRS. 8 residues coordinate Zn(2+): C9, H15, H25, C29, C43, H49, H59, and C63. The disordered stretch occupies residues 67-99; the sequence is SAVEEEDTENPLKVSPPSSEQNDDTQQVSPCLP. Over residues 82 to 95 the composition is skewed to polar residues; sequence PPSSEQNDDTQQVS.

Belongs to the UPF0224 (FAM112) family.

The sequence is that of Gametocyte-specific factor 1-like (GTSF1L) from Homo sapiens (Human).